We begin with the raw amino-acid sequence, 315 residues long: Ribose-phosphate pyrophosphokinase (315 aa).

ATP is bound by residues 37–39 (DGE) and 96–97 (RQ). Positions 131 and 170 each coordinate Mg(2+). Lysine 194 is an active-site residue. D-ribose 5-phosphate contacts are provided by residues arginine 196, aspartate 220, and 224 to 228 (DTGGT).

This sequence belongs to the ribose-phosphate pyrophosphokinase family. Class I subfamily. As to quaternary structure, homohexamer. Mg(2+) is required as a cofactor.

It is found in the cytoplasm. The catalysed reaction is D-ribose 5-phosphate + ATP = 5-phospho-alpha-D-ribose 1-diphosphate + AMP + H(+). It functions in the pathway metabolic intermediate biosynthesis; 5-phospho-alpha-D-ribose 1-diphosphate biosynthesis; 5-phospho-alpha-D-ribose 1-diphosphate from D-ribose 5-phosphate (route I): step 1/1. Involved in the biosynthesis of the central metabolite phospho-alpha-D-ribosyl-1-pyrophosphate (PRPP) via the transfer of pyrophosphoryl group from ATP to 1-hydroxyl of ribose-5-phosphate (Rib-5-P). In Yersinia pestis, this protein is Ribose-phosphate pyrophosphokinase.